The sequence spans 183 residues: Oleosin 5 (183 aa).

The polar stretch occupies residues 1 to 39 (MADVRTHSHQLQVHPQRQHEGGIKVLYPQSGPSSTQVLA). Helical transmembrane passes span 37–57 (VLAV…AGLT), 66–86 (MLAF…AFVI), and 87–107 (GLAM…LSSM). The tract at residues 40–113 (VFVGVPIGGT…LSSMSWVLNY (74 aa)) is hydrophobic. Positions 144-183 (KDAGQTIEDKAHDVREAKTFDVRDRDTTKGTHNVRDTKTT) are disordered.

This sequence belongs to the oleosin family.

It localises to the lipid droplet. Its subcellular location is the membrane. Functionally, may have a structural role to stabilize the lipid body during desiccation of the seed by preventing coalescence of the oil. Probably interacts with both lipid and phospholipid moieties of lipid bodies. May also provide recognition signals for specific lipase anchorage in lipolysis during seedling growth. This is Oleosin 5 from Arabidopsis thaliana (Mouse-ear cress).